Reading from the N-terminus, the 357-residue chain is MFVDNIKLKVKSGKGGQGCVSFRREKFVVKGGPDGGDGGKGGDVIVECDKNTHTLSHYKGRKLLKAKNGRPGEGRKKHGANGEDLILKVPPGTVIKNAETGEVLLDMKEDGERKVLLEGGRGGLGNWHFRGPRNQTPRYAQPGEEGQELEIVLELKLIADVGLVGFPNAGKSTLISTLSNARPEIANYEFTTLTPKLGVVRVDEYRSFVMADIPGIIEGAHEGKGLGIEFLKHIERTSTILYMIDLSSYRDPVYQFKTLQKELKEYSEKLASRDYAIALTKCDSVEVEKIEEFFEKLGISKTEPKFKADPNLPCHFDDKTFVLPISSVANINIEALKFALFDLVEKNKRKENEENSF.

Residues methionine 1–isoleucine 158 enclose the Obg domain. One can recognise an OBG-type G domain in the interval alanine 159–glutamate 345. GTP is bound by residues glycine 165–serine 172, phenylalanine 190–threonine 194, aspartate 212–glycine 215, threonine 280–aspartate 283, and serine 326–valine 328. Serine 172 and threonine 192 together coordinate Mg(2+).

The protein belongs to the TRAFAC class OBG-HflX-like GTPase superfamily. OBG GTPase family. In terms of assembly, monomer. It depends on Mg(2+) as a cofactor.

It localises to the cytoplasm. An essential GTPase which binds GTP, GDP and possibly (p)ppGpp with moderate affinity, with high nucleotide exchange rates and a fairly low GTP hydrolysis rate. Plays a role in control of the cell cycle, stress response, ribosome biogenesis and in those bacteria that undergo differentiation, in morphogenesis control. This Nautilia profundicola (strain ATCC BAA-1463 / DSM 18972 / AmH) protein is GTPase Obg.